The primary structure comprises 414 residues: Heterogeneous nuclear ribonucleoprotein F (414 aa).

Met1 is subject to N-acetylmethionine. An N-acetylmethionine; in Heterogeneous nuclear ribonucleoprotein F, N-terminally processed modification is found at Met2. The 80-residue stretch at 11 to 90 (FVVKLRGLPW…RYIEVFKSHR (80 aa)) folds into the RRM 1 domain. Residue Lys72 forms a Glycyl lysine isopeptide (Lys-Gly) (interchain with G-Cter in SUMO) linkage. The tract at residues 81–86 (RYIEVF) is interaction with RNA. Lys87 is covalently cross-linked (Glycyl lysine isopeptide (Lys-Gly) (interchain with G-Cter in SUMO2)). Ser104 and Ser161 each carry phosphoserine. An RRM 2 domain is found at 111 to 188 (GFVRLRGLPF…RYIEVFKSSQ (78 aa)). Lys167 participates in a covalent cross-link: Glycyl lysine isopeptide (Lys-Gly) (interchain with G-Cter in SUMO2). An interaction with RNA region spans residues 179 to 184 (RYIEVF). Residue Lys185 forms a Glycyl lysine isopeptide (Lys-Gly) (interchain with G-Cter in SUMO2) linkage. Phosphoserine occurs at positions 187, 193, and 195. At Lys200 the chain carries N6-acetyllysine; alternate. Lys200 is covalently cross-linked (Glycyl lysine isopeptide (Lys-Gly) (interchain with G-Cter in SUMO2); alternate). Thr215 is modified (phosphothreonine). Residue Lys224 is modified to N6-acetyllysine; alternate. A Glycyl lysine isopeptide (Lys-Gly) (interchain with G-Cter in SUMO2); alternate cross-link involves residue Lys224. Ser265 bears the Phosphoserine mark. The 78-residue stretch at 289 to 366 (HCVHMRGLPY…IELFLNSTTG (78 aa)) folds into the RRM 3 domain. The interval 355–360 (RYIELF) is interaction with RNA.

Identified in the spliceosome C complex. Interacts with AGO1, AGO2, TBP and TXNL4/DIM1. Sumoylated.

The protein resides in the nucleus. The protein localises to the nucleoplasm. Component of the heterogeneous nuclear ribonucleoprotein (hnRNP) complexes which provide the substrate for the processing events that pre-mRNAs undergo before becoming functional, translatable mRNAs in the cytoplasm. Plays a role in the regulation of alternative splicing events. Binds G-rich sequences in pre-mRNAs and keeps target RNA in an unfolded state. In Bos taurus (Bovine), this protein is Heterogeneous nuclear ribonucleoprotein F (HNRNPF).